The primary structure comprises 111 residues: UPF0060 membrane protein NFA_36830 (111 aa).

4 helical membrane-spanning segments follow: residues 7–27 (LVLF…VWQG), 33–53 (GLWW…VATF), 62–82 (VLAA…VLVD), and 91–111 (LLGA…PRGG).

Belongs to the UPF0060 family.

The protein resides in the cell membrane. The sequence is that of UPF0060 membrane protein NFA_36830 from Nocardia farcinica (strain IFM 10152).